A 387-amino-acid chain; its full sequence is Protein PHYTOCHROME KINASE SUBSTRATE 3 (387 aa).

Disordered stretches follow at residues 1 to 21, 74 to 128, and 242 to 271; these read MDAE…PQLL, HEKE…CNSQ, and LSTK…ASVA. Polar residues predominate over residues 12-21; it reads QISSYKPQLL. The segment covering 74 to 83 has biased composition (basic and acidic residues); that stretch reads HEKENTHDHP. Residues 114-128 show a composition bias toward polar residues; that stretch reads HGTPSVRSESSCNSQ. Residues 242-261 are compositionally biased toward low complexity; it reads LSTKNNNHNNNGNNSSMSSN.

This sequence belongs to the PKS family.

In terms of biological role, probably involved in the phytochrome signaling pathway. This chain is Protein PHYTOCHROME KINASE SUBSTRATE 3 (PKS3), found in Arabidopsis thaliana (Mouse-ear cress).